Here is a 1024-residue protein sequence, read N- to C-terminus: Beta-galactosidase (1024 aa).

Substrate is bound by residues asparagine 103 and aspartate 202. Aspartate 202 serves as a coordination point for Na(+). Residues glutamate 417, histidine 419, and glutamate 462 each contribute to the Mg(2+) site. Substrate-binding positions include glutamate 462 and 538 to 541 (EYAH). The active-site Proton donor is glutamate 462. The active-site Nucleophile is glutamate 538. Residue asparagine 598 coordinates Mg(2+). Phenylalanine 602 and asparagine 605 together coordinate Na(+). Residues asparagine 605 and tryptophan 1000 each coordinate substrate.

This sequence belongs to the glycosyl hydrolase 2 family. As to quaternary structure, homotetramer. The cofactor is Mg(2+). Na(+) serves as cofactor.

It carries out the reaction Hydrolysis of terminal non-reducing beta-D-galactose residues in beta-D-galactosides.. This is Beta-galactosidase from Escherichia coli (strain SMS-3-5 / SECEC).